Reading from the N-terminus, the 200-residue chain is ATP-dependent Clp protease proteolytic subunit (200 aa).

The active-site Nucleophile is the serine 98. Histidine 123 is an active-site residue.

This sequence belongs to the peptidase S14 family. In terms of assembly, fourteen ClpP subunits assemble into 2 heptameric rings which stack back to back to give a disk-like structure with a central cavity, resembling the structure of eukaryotic proteasomes.

The protein resides in the cytoplasm. The enzyme catalyses Hydrolysis of proteins to small peptides in the presence of ATP and magnesium. alpha-casein is the usual test substrate. In the absence of ATP, only oligopeptides shorter than five residues are hydrolyzed (such as succinyl-Leu-Tyr-|-NHMec, and Leu-Tyr-Leu-|-Tyr-Trp, in which cleavage of the -Tyr-|-Leu- and -Tyr-|-Trp bonds also occurs).. Functionally, cleaves peptides in various proteins in a process that requires ATP hydrolysis. Has a chymotrypsin-like activity. Plays a major role in the degradation of misfolded proteins. The protein is ATP-dependent Clp protease proteolytic subunit of Deinococcus geothermalis (strain DSM 11300 / CIP 105573 / AG-3a).